Consider the following 553-residue polypeptide: Probable malate:quinone oxidoreductase (553 aa).

The segment at 524 to 553 (PPPKIDLGAPSQATGNAPARPAKASADMAL) is disordered.

The protein belongs to the MQO family. FAD is required as a cofactor.

It carries out the reaction (S)-malate + a quinone = a quinol + oxaloacetate. The protein operates within carbohydrate metabolism; tricarboxylic acid cycle; oxaloacetate from (S)-malate (quinone route): step 1/1. In Burkholderia cenocepacia (strain HI2424), this protein is Probable malate:quinone oxidoreductase.